The chain runs to 329 residues: Homeobox protein ceh-40 (329 aa).

In terms of domain architecture, PBC spans 3–186 (EASKSIMDLL…VIQLKKRYLD (184 aa)). A PBC-A region spans residues 10–90 (DLLSEVVKIT…EGVAGPDDSL (81 aa)). Residues 93 to 186 (IQEAAGTDQY…VIQLKKRYLD (94 aa)) are PBC-B. The homeobox; TALE-type DNA-binding region spans 187–249 (ARRKRRNFSK…NKRIRYKKTM (63 aa)). Positions 248 to 275 (TMAKNEDERRENRKPEDRPPPGAPGAPY) are disordered. Basic and acidic residues predominate over residues 250–266 (AKNEDERRENRKPEDRP).

The protein belongs to the TALE/PBX homeobox family. As to expression, expressed in head dopaminergic neurons.

The protein resides in the nucleus. Functionally, plays a role in regulating gene expression in dopaminergic neurons, acting redundantly with homeobox protein ceh-20 in head neurons. May activate dopamine pathway genes in concert with ETS domain-containing protein ast-1, and homeobox proteins ceh-43 and ceh-20. This chain is Homeobox protein ceh-40 (ceh-40), found in Caenorhabditis elegans.